The primary structure comprises 826 residues: Arsenite oxidase subunit AioA (826 aa).

Residues cysteine 22, cysteine 25, and cysteine 29 each coordinate [3Fe-4S] cluster. The substrate site is built by histidine 196, glutamate 204, arginine 419, and histidine 423.

It belongs to the prokaryotic molybdopterin-containing oxidoreductase family. Heterodimer consisting of a large and a small subunit. The cofactor is [3Fe-4S] cluster. Requires Mo-bis(molybdopterin guanine dinucleotide) as cofactor.

The catalysed reaction is 2 oxidized [azurin] + arsenite + H2O = 2 reduced [azurin] + arsenate + 3 H(+). Functionally, involved in the detoxification of arsenic. Oxidizes As(III)O3(3-) (arsenite) to the somewhat less toxic As(V)O4(3-) (arsenate). This is Arsenite oxidase subunit AioA (aioA) from Herminiimonas arsenicoxydans.